Reading from the N-terminus, the 624-residue chain is MDSNFKWLLFAILISLTFSGFVLHHGVLAESVKPDEAKQLRDEVRGMFYHAFDGYMNNAFPLDELRPLSCQGEDTLGGYALTLIDSLDTLALLGDRERFTSSVEWIGKNLQFNINKTVSVFETTIRVLGGLLSAHLIASDYATGMRIPSYNNELLVLAENLARRMLPAFDTPTGIPFGSVNLMYGVDKHESKITSTAGGGTLSLEFGVLSRLTNDPVFEQVAKNAVRGLWARRSNLDLVGAHINVFTGEWTQKDAGIGTSIDSFYEYLLKAYILFGDEEYLYIFQEAYRSAMQYLHKDPWYVEVNMDSAAIVWPVFNSLQAFWPGLQVLAGDVDPAIRTHTAFFSVWKRYGFTPEGFNLATLSVQYGQKSYPLRPELIESTYWLYKATRDPRYLDAGRDFVASLQYGAKCPCGYCHITDVELHKQEDHMESFFLAETVKYLWLLFDLAVDSDNLVDNGPYKYIFSTEGHLLPITPQISLAREHCSYFGGYCPSNSTKLEQEVLGEDSSNDDHSNDYPYHESFPVTGLIKGLCPGLTHAQKYGFSYVLPEKTDREDVNQPKPVVTSSSIVLISDQTVEKRPQEEEGFTSQSEPIMTISGGSSNDQTGQELTLLESETDDQRSYSS.

The Cytoplasmic portion of the chain corresponds to 1–7 (MDSNFKW). A helical; Signal-anchor for type II membrane protein membrane pass occupies residues 8–28 (LLFAILISLTFSGFVLHHGVL). Residues 29–624 (AESVKPDEAK…ETDDQRSYSS (596 aa)) are Lumenal-facing. Residue asparagine 115 is glycosylated (N-linked (GlcNAc...) asparagine). Glutamate 122 acts as the Proton donor in catalysis. Residue aspartate 262 is part of the active site. The Proton donor role is filled by glutamate 355. Glutamate 376 is a catalytic residue. Threonine 466 is a binding site for Ca(2+). N-linked (GlcNAc...) asparagine glycosylation occurs at asparagine 494. The interval 574 to 624 (QTVEKRPQEEEGFTSQSEPIMTISGGSSNDQTGQELTLLESETDDQRSYSS) is disordered. A compositionally biased stretch (polar residues) spans 586-608 (FTSQSEPIMTISGGSSNDQTGQE).

This sequence belongs to the glycosyl hydrolase 47 family. Ca(2+) serves as cofactor.

The protein resides in the endoplasmic reticulum membrane. It functions in the pathway protein modification; protein glycosylation. In terms of biological role, can convert Man(9)GlcNAc(2) and Man(8)GlcNAc(2) into N-glycans with a terminal alpha-1,6-linked Man residue in the C-branch. Functions in the formation of unique N-glycan structures that are specifically recognized by components of the endoplasmic reticulum-associated degradation (ERAD) machinery, which leads to the degradation of misfolded glycoproteins. Most likely generates N-glycan signal on misfolded glycoproteins that is subsequently recognized by OS9. Required for ERAD of the heavily glycosylated and misfolded BRI1 variants BRI1-5 and BRI1-9. Does not seem to play role in N-glycan processing of correctly folded proteins destined for secretion. The sequence is that of Alpha-mannosidase I MNS4 (MNS4) from Arabidopsis thaliana (Mouse-ear cress).